Consider the following 301-residue polypeptide: MKIGILSRNQDLYSTRRLIEAAESRGHEVKVIDALRCYMNINSEKPQIHFKGEELINYDAIIPRIGASVTFYGTAVLRQFEMMNVYPVNESVAITRSRDKLRSMQLLSRKGIGMPITGFASKPDDVKDLLDMVGGGPVVIKLLEGTQGIGVVLAETRKAAESVVEAFMGLKANIMVQEFIKEAGGADIRCFVIGGKVIAAMKRQGAEGEFRSNLHRGGSASLVKLTPEERKTAVAAANIMGLNVAGVDLLRSDRGPLVMEVNSSPGLEGIEAATGKDVAGLIVDFIEKNAATKGTKTRGKG.

Positions 104–287 constitute an ATP-grasp domain; it reads MQLLSRKGIG…VAGLIVDFIE (184 aa). Residues Lys141, 178–179, Asp187, and 211–213 each bind ATP; these read EF and RSN. Positions 248, 260, and 262 each coordinate Mg(2+). 3 residues coordinate Mn(2+): Asp248, Glu260, and Asn262.

The protein belongs to the RimK family. Mg(2+) serves as cofactor. It depends on Mn(2+) as a cofactor.

The chain is Probable alpha-L-glutamate ligase from Aliivibrio salmonicida (strain LFI1238) (Vibrio salmonicida (strain LFI1238)).